The chain runs to 179 residues: Ribosome maturation factor RimM (179 aa).

Residues 96 to 175 form the PRC barrel domain; sequence KDEYFWFDIE…IITVIGAMDI (80 aa).

It belongs to the RimM family. In terms of assembly, binds ribosomal protein uS19.

The protein localises to the cytoplasm. In terms of biological role, an accessory protein needed during the final step in the assembly of 30S ribosomal subunit, possibly for assembly of the head region. Essential for efficient processing of 16S rRNA. May be needed both before and after RbfA during the maturation of 16S rRNA. It has affinity for free ribosomal 30S subunits but not for 70S ribosomes. The protein is Ribosome maturation factor RimM of Sulfurimonas denitrificans (strain ATCC 33889 / DSM 1251) (Thiomicrospira denitrificans (strain ATCC 33889 / DSM 1251)).